Reading from the N-terminus, the 369-residue chain is MHGESPIKRRESRKIWVGNVPVGGDAPIAVQSMTNSDTNDVAATVAQINRLEAAGVDIVRVSVPDMDAAEAFGKIKQLVKVPLVADIHFDYKIALRVAELGVDCLRINPGNIGREDRVRAVVDAARDRGIPIRIGVNAGSLEKDLQKKYGEPTPAALVESALRHVEHLERLNFQDFKVSVKASDVFMAVEAYRLLAKEIVQPLHLGITEAGGLRSGTVKSAVGLGMLLAEGIGDTIRISLAADPVEEVKVGYDILKSLHLRSRGINFIACPSCSRQNFDVVKTMNELEGRLEDLLVPLDVAVIGCVVNGPGEAKEAHIGLTGGTPNLIYIDGKPSQKLTNDNLVDELEKLIREKAAEKVEADAAVIARG.

The [4Fe-4S] cluster site is built by cysteine 270, cysteine 273, cysteine 305, and glutamate 312.

This sequence belongs to the IspG family. Requires [4Fe-4S] cluster as cofactor.

The enzyme catalyses (2E)-4-hydroxy-3-methylbut-2-enyl diphosphate + oxidized [flavodoxin] + H2O + 2 H(+) = 2-C-methyl-D-erythritol 2,4-cyclic diphosphate + reduced [flavodoxin]. The protein operates within isoprenoid biosynthesis; isopentenyl diphosphate biosynthesis via DXP pathway; isopentenyl diphosphate from 1-deoxy-D-xylulose 5-phosphate: step 5/6. Functionally, converts 2C-methyl-D-erythritol 2,4-cyclodiphosphate (ME-2,4cPP) into 1-hydroxy-2-methyl-2-(E)-butenyl 4-diphosphate. The polypeptide is 4-hydroxy-3-methylbut-2-en-1-yl diphosphate synthase (flavodoxin) (Pseudomonas fluorescens (strain Pf0-1)).